Consider the following 199-residue polypeptide: Transgelin-2 (199 aa).

The residue at position 2 (alanine 2) is an N-acetylalanine. Residue serine 11 is modified to Phosphoserine. Residues lysine 17 and lysine 20 each carry the N6-acetyllysine modification. Positions 24-136 (ADLEQILIQW…RTLMNLGGLA (113 aa)) constitute a Calponin-homology (CH) domain. Serine 163 is subject to Phosphoserine. Residue lysine 171 forms a Glycyl lysine isopeptide (Lys-Gly) (interchain with G-Cter in SUMO2) linkage. One copy of the Calponin-like repeat lies at 174 to 199 (IGLQMGTNRGASQAGMTGYGMPRQIL). The residue at position 180 (threonine 180) is a Phosphothreonine. Arginine 182 and arginine 196 each carry omega-N-methylarginine.

This sequence belongs to the calponin family. In terms of tissue distribution, expressed in epididymis (at protein level).

The sequence is that of Transgelin-2 (TAGLN2) from Homo sapiens (Human).